The following is a 341-amino-acid chain: Pre-mRNA-processing protein 45 (341 aa).

Disordered stretches follow at residues 1–31 (MFSS…HEKS), 181–226 (NYQE…EDQA), and 302–341 (EQHE…KTKY). Positions 192–201 (FKLRKNRHKN) are enriched in basic residues. The segment covering 302-318 (EQHEKENKLKELADIAR) has biased composition (basic and acidic residues).

It belongs to the SNW family. As to quaternary structure, associated with the spliceosome.

Its subcellular location is the nucleus. Involved in pre-mRNA splicing. This is Pre-mRNA-processing protein 45 (PRP45) from Debaryomyces hansenii (strain ATCC 36239 / CBS 767 / BCRC 21394 / JCM 1990 / NBRC 0083 / IGC 2968) (Yeast).